Here is a 303-residue protein sequence, read N- to C-terminus: N-acetyl-D-glucosamine kinase (303 aa).

Residues G4–K11 and G133–F140 contribute to the ATP site. 4 residues coordinate Zn(2+): H157, C177, C179, and C184.

Belongs to the ROK (NagC/XylR) family. NagK subfamily.

It carries out the reaction N-acetyl-D-glucosamine + ATP = N-acetyl-D-glucosamine 6-phosphate + ADP + H(+). It functions in the pathway cell wall biogenesis; peptidoglycan recycling. Its function is as follows. Catalyzes the phosphorylation of N-acetyl-D-glucosamine (GlcNAc) derived from cell-wall degradation, yielding GlcNAc-6-P. The protein is N-acetyl-D-glucosamine kinase of Escherichia coli O81 (strain ED1a).